We begin with the raw amino-acid sequence, 268 residues long: Indole-3-glycerol phosphate synthase (268 aa).

It belongs to the TrpC family.

The enzyme catalyses 1-(2-carboxyphenylamino)-1-deoxy-D-ribulose 5-phosphate + H(+) = (1S,2R)-1-C-(indol-3-yl)glycerol 3-phosphate + CO2 + H2O. The protein operates within amino-acid biosynthesis; L-tryptophan biosynthesis; L-tryptophan from chorismate: step 4/5. This is Indole-3-glycerol phosphate synthase from Acinetobacter baumannii (strain ACICU).